A 569-amino-acid chain; its full sequence is Rab GTPase-binding effector protein 2 (569 aa).

3 disordered regions span residues 1 to 41, 180 to 265, and 388 to 411; these read MAAA…GELS, IQRR…ETAS, and RAEQ…ESLP. Ala2 carries the N-acetylalanine modification. Residues 34–187 adopt a coiled-coil conformation; that stretch reads EAESGELSRL…QEIQRRPRHA (154 aa). Phosphoserine occurs at positions 189 and 193. Position 200 is a phosphoserine; by GSK3-alpha (Ser200). Ser204 is modified (phosphoserine). Low complexity-rich tracts occupy residues 245–257 and 393–403; these read SSSS…QGLS and PSSAPQGSQQE. Residues 289–523 adopt a coiled-coil conformation; sequence DTQWEQLQTE…LQAELETSEQ (235 aa).

It belongs to the rabaptin family. Heterodimer with RABGEF1. The dimer binds RAB5A that has been activated by GTP-binding. Interacts with SDCCAG8; this interaction is important for ciliogenesis regulation. Interacts with RAB4A; this interaction may mediate VEGFR2 cell surface expression.

Its subcellular location is the cytoplasm. The protein localises to the early endosome. The protein resides in the cytoskeleton. It is found in the microtubule organizing center. It localises to the centrosome. Its subcellular location is the cilium basal body. Functionally, plays a role in membrane trafficking and in homotypic early endosome fusion. Participates in arteriogenesis by regulating vascular endothelial growth factor receptor 2/VEGFR2 cell surface expression and endosomal trafficking. By interacting with SDCCAG8, localizes to centrosomes and plays a critical role in ciliogenesis. The sequence is that of Rab GTPase-binding effector protein 2 (RABEP2) from Homo sapiens (Human).